We begin with the raw amino-acid sequence, 963 residues long: Protocadherin alpha-C1 (963 aa).

The N-terminal stretch at 1-18 (MVGWGVAVLCLWVSCGAA) is a signal peptide. 5 consecutive Cadherin domains span residues 19-124 (AGQL…SPLF), 125-233 (PAGD…APVF), 234-340 (ERSV…APEL), 349-445 (VPED…TPSF), and 446-555 (PQPQ…YPVI). Over 19-683 (AGQLEYSVPE…GGQLSAQNLY (665 aa)) the chain is Extracellular. N38 is a glycosylation site (N-linked (GlcNAc...) asparagine). N-linked (GlcNAc...) asparagine glycans are attached at residues N248 and N274. N-linked (GlcNAc...) asparagine glycosylation is present at N562. One can recognise a Cadherin 6 domain in the interval 570-667 (VPRSARTGHL…NSVPQLLPDF (98 aa)). A helical transmembrane segment spans residues 684–704 (LVIALACISFLFLGCLLFFVC). At 705–963 (TKLHQSPGCC…GNSTTDNSDQ (259 aa)) the chain is on the cytoplasmic side. PXXP repeat units lie at residues 812–815 (PRQP), 845–848 (PGGP), 886–889 (PGNP), and 904–907 (PGSP). The tract at residues 812-907 (PRQPNPDWRY…PDKFIIPGSP (96 aa)) is 4 X 4 AA repeats of P-X-X-P. A disordered region spans residues 844-902 (GPGGPDQQWPTVSSATPEPEAGEVSPPVGAGVNSNSWTFKYGPGNPKQSGPGELPDKFI). The disordered stretch occupies residues 914–963 (QEPANSQIDKSDFITFGKKEETKKKKKKKKGNKTQEKKEKGNSTTDNSDQ). A compositionally biased stretch (basic and acidic residues) spans 922-936 (DKSDFITFGKKEETK).

It localises to the cell membrane. Potential calcium-dependent cell-adhesion protein. May be involved in the establishment and maintenance of specific neuronal connections in the brain. This is Protocadherin alpha-C1 (PCDHAC1) from Pan troglodytes (Chimpanzee).